Reading from the N-terminus, the 160-residue chain is 2-amino-4-hydroxy-6-hydroxymethyldihydropteridine pyrophosphokinase (160 aa).

Belongs to the HPPK family. Monomer.

It carries out the reaction 6-hydroxymethyl-7,8-dihydropterin + ATP = (7,8-dihydropterin-6-yl)methyl diphosphate + AMP + H(+). The protein operates within cofactor biosynthesis; tetrahydrofolate biosynthesis; 2-amino-4-hydroxy-6-hydroxymethyl-7,8-dihydropteridine diphosphate from 7,8-dihydroneopterin triphosphate: step 4/4. Catalyzes the transfer of pyrophosphate from adenosine triphosphate (ATP) to 6-hydroxymethyl-7,8-dihydropterin, an enzymatic step in folate biosynthesis pathway. The polypeptide is 2-amino-4-hydroxy-6-hydroxymethyldihydropteridine pyrophosphokinase (folK) (Haemophilus influenzae (strain ATCC 51907 / DSM 11121 / KW20 / Rd)).